We begin with the raw amino-acid sequence, 175 residues long: Ribosome maturation factor RimM (175 aa).

In terms of domain architecture, PRC barrel spans 97–175 (EGEFYWHQLE…RMVVDWDPEF (79 aa)).

This sequence belongs to the RimM family. Binds ribosomal protein uS19.

Its subcellular location is the cytoplasm. Functionally, an accessory protein needed during the final step in the assembly of 30S ribosomal subunit, possibly for assembly of the head region. Essential for efficient processing of 16S rRNA. May be needed both before and after RbfA during the maturation of 16S rRNA. It has affinity for free ribosomal 30S subunits but not for 70S ribosomes. The sequence is that of Ribosome maturation factor RimM from Marinobacter nauticus (strain ATCC 700491 / DSM 11845 / VT8) (Marinobacter aquaeolei).